Reading from the N-terminus, the 184-residue chain is Protein DP71L (184 aa).

Over residues 1–15 (MSRRNKRSRRRRKKP) the composition is skewed to basic residues. The segment at 1-41 (MSRRNKRSRRRRKKPLNTIQPGPSKPSAQDEPIKSVSHHSS) is disordered. Important for host CHOP inhibition stretches follow at residues 125–127 (VYF) and 169–173 (LSAVL).

It belongs to the asfivirus DP71L family. Interacts (via C-terminus) with host PPP1CB.

Its function is as follows. Interacts with the host phosphatase PP1 catalytic subunit (PPP1CB) and recruits it to dephosphorylate EIF2S1/eIF2alpha and therefore restores the host translation that has been shut-down by the host. Also inhibits the EIF2S1/eIF2alpha-ATF4-DDIT3/CHOP pathway. In Ornithodoros (relapsing fever ticks), this protein is Protein DP71L.